Here is a 292-residue protein sequence, read N- to C-terminus: High-affinity heme uptake system protein IsdE (292 aa).

The signal sequence occupies residues Met1 to Ser19. A lipid anchor (N-palmitoyl cysteine) is attached at Cys20. Cys20 is lipidated: S-diacylglycerol cysteine. The region spanning Arg35 to Lys291 is the Fe/B12 periplasmic-binding domain. Heme is bound by residues Val41, Ala42, Ser60, Tyr61, Met78, and His229.

It belongs to the bacterial solute-binding protein 8 family. Heme b serves as cofactor.

The protein resides in the cell membrane. Functionally, involved in heme (porphyrin) scavenging. Binds Fe(2+) and Fe(3+) heme but the largest fraction is Fe(2+) heme. Functions as a high-affinity heme binding protein and probably has a role in relaying heme-iron from cell wall-anchored isd proteins receptors to the probable permease IsdF. The polypeptide is High-affinity heme uptake system protein IsdE (isdE) (Staphylococcus aureus (strain MRSA252)).